Reading from the N-terminus, the 359-residue chain is Type-1 angiotensin II receptor (359 aa).

Topologically, residues 1–25 (MILNSSTEDGIKRIQDDCPKAGRHN) are extracellular. Residue Asn-4 is glycosylated (N-linked (GlcNAc...) asparagine). 2 residues coordinate angiotensin II: Gln-15 and Asp-17. 2 disulfides stabilise this stretch: Cys-18–Cys-274 and Cys-101–Cys-180. The helical transmembrane segment at 26–55 (YIFIMIPTLYSIIFVVGLFGNSLVVIVIYF) threads the bilayer. Topologically, residues 56-61 (YMKLKT) are cytoplasmic. Residues 62 to 89 (VASVFLLNLALADLCFLLTLPLWAVYTA) traverse the membrane as a helical segment. Topologically, residues 90-98 (MEYRWPFGN) are extracellular. The helical transmembrane segment at 99–125 (YLCKIASGSVSFNLYASVFLLTCLSID) threads the bilayer. The Cytoplasmic segment spans residues 126-141 (RYLAIVHPMKSRLRRT). The chain crosses the membrane as a helical span at residues 142-165 (MLVAKVTCIIIWLLAGLASLPTII). The Extracellular segment spans residues 166-190 (HRNVFFIENTNITVCAFHYESQNST). An angiotensin II-binding site is contributed by Arg-167. Residue Asn-176 is glycosylated (N-linked (GlcNAc...) asparagine). Positions 182, 183, and 184 each coordinate angiotensin II. N-linked (GlcNAc...) asparagine glycosylation is present at Asn-188. Residues 191–216 (LPVGLGLTKNILGFLFPFLIILTSYT) traverse the membrane as a helical segment. Residue Lys-199 participates in angiotensin II binding. Topologically, residues 217–239 (LIWKTLKKAYEIQKNKPRKDDIF) are cytoplasmic. The chain crosses the membrane as a helical span at residues 240–268 (KIILAIVLFFFFSWVPHQIFTFMDVLIQL). Residues 269–278 (GLIRDCKIED) lie on the Extracellular side of the membrane. A helical transmembrane segment spans residues 279 to 304 (IVDTAMPITICLAYFNNCLNPPFYGF). The Cytoplasmic portion of the chain corresponds to 305–359 (LGKKFKKYFLQLLKYIPPKAKSHSNLSTKMSTLSYRPSENGNSSTKKPAPCTEVE). The segment covering 335–350 (STLSYRPSENGNSSTK) has biased composition (polar residues). A disordered region spans residues 335–359 (STLSYRPSENGNSSTKKPAPCTEVE). Cys-355 carries the S-palmitoyl cysteine lipid modification.

The protein belongs to the G-protein coupled receptor 1 family. Interacts with MAS1. Interacts with ARRB1. Interacts with FLNA (via filamin repeat 21); increases PKA-mediated phosphorylation of FLNA. In terms of processing, C-terminal Ser or Thr residues may be phosphorylated.

Its subcellular location is the cell membrane. In terms of biological role, receptor for angiotensin II, a vasoconstricting peptide, which acts as a key regulator of blood pressure and sodium retention by the kidney. The activated receptor in turn couples to G-alpha proteins G(q) (GNAQ, GNA11, GNA14 or GNA15) and thus activates phospholipase C and increases the cytosolic Ca(2+) concentrations, which in turn triggers cellular responses such as stimulation of protein kinase C. The chain is Type-1 angiotensin II receptor (AGTR1) from Ovis aries (Sheep).